Reading from the N-terminus, the 366-residue chain is MKISELMEVLNNHVPFHQAESWDNVGLLIGNDKLDITGILTTLDCTDDVVNQAIELNTNTIIAHHPLIFKGVKRIVEDGYGSIIRKLIQNNINLIALHTNLDVNPKGVNRMLADQIGLENISMINTNSSYYYKVQTFIPKNYIEDFKDSLNELGLAKEGNYEYCFFESEGKGQFKPVGDASPYIGKLDSIEYVDEIKLEFMIKDNELEITKRAILDNHPYETPVFDFIKMNKESEYGLGIIGQLNQTMTLDEFSEYAKKQLNIPSVRYTGQHDSPIKKVAIIGGSGIGFEYKASQLGADVFVTGDIKHHDALDAKIQNVNLLDINHYSEYVMKEGLKELLEKWLFKYENQFPIYASEINTDPFKYK.

Positions 64, 65, 102, 326, and 329 each coordinate a divalent metal cation.

It belongs to the GTP cyclohydrolase I type 2/NIF3 family. In terms of assembly, homohexamer.

The sequence is that of GTP cyclohydrolase 1 type 2 homolog from Staphylococcus epidermidis (strain ATCC 35984 / DSM 28319 / BCRC 17069 / CCUG 31568 / BM 3577 / RP62A).